Consider the following 246-residue polypeptide: Electron transfer flavoprotein beta subunit lysine methyltransferase (246 aa).

Belongs to the methyltransferase superfamily. ETFBKMT family.

It localises to the cytoplasm. The protein localises to the mitochondrion matrix. The catalysed reaction is L-lysyl-[protein] + 3 S-adenosyl-L-methionine = N(6),N(6),N(6)-trimethyl-L-lysyl-[protein] + 3 S-adenosyl-L-homocysteine + 3 H(+). Functionally, protein-lysine methyltransferase that selectively trimethylates the flavoprotein ETFB in mitochondria. Thereby, may negatively regulate the function of ETFB in electron transfer from Acyl-CoA dehydrogenases to the main respiratory chain. This chain is Electron transfer flavoprotein beta subunit lysine methyltransferase (etfbkmt), found in Xenopus laevis (African clawed frog).